A 357-amino-acid chain; its full sequence is UDP-N-acetylglucosamine--N-acetylmuramyl-(pentapeptide) pyrophosphoryl-undecaprenol N-acetylglucosamine transferase (357 aa).

UDP-N-acetyl-alpha-D-glucosamine-binding positions include 13 to 15 (SAG), Arg166, Ser196, and Gln291.

This sequence belongs to the glycosyltransferase 28 family. MurG subfamily.

The protein localises to the cell membrane. The catalysed reaction is di-trans,octa-cis-undecaprenyl diphospho-N-acetyl-alpha-D-muramoyl-L-alanyl-D-glutamyl-meso-2,6-diaminopimeloyl-D-alanyl-D-alanine + UDP-N-acetyl-alpha-D-glucosamine = di-trans,octa-cis-undecaprenyl diphospho-[N-acetyl-alpha-D-glucosaminyl-(1-&gt;4)]-N-acetyl-alpha-D-muramoyl-L-alanyl-D-glutamyl-meso-2,6-diaminopimeloyl-D-alanyl-D-alanine + UDP + H(+). It participates in cell wall biogenesis; peptidoglycan biosynthesis. Functionally, cell wall formation. Catalyzes the transfer of a GlcNAc subunit on undecaprenyl-pyrophosphoryl-MurNAc-pentapeptide (lipid intermediate I) to form undecaprenyl-pyrophosphoryl-MurNAc-(pentapeptide)GlcNAc (lipid intermediate II). The sequence is that of UDP-N-acetylglucosamine--N-acetylmuramyl-(pentapeptide) pyrophosphoryl-undecaprenol N-acetylglucosamine transferase from Clostridium perfringens (strain ATCC 13124 / DSM 756 / JCM 1290 / NCIMB 6125 / NCTC 8237 / Type A).